The primary structure comprises 1004 residues: 26S proteasome non-ATPase regulatory subunit 1 homolog A (1004 aa).

Ala-2 bears the N-acetylalanine mark. A Glycyl lysine isopeptide (Lys-Gly) (interchain with G-Cter in ubiquitin) cross-link involves residue Lys-166. PC repeat units lie at residues 412–447 (SATAGLGVIHRGHLQQGRSLMAPYLPQGGAGGGGSP), 452–485 (GALYALGLIHANHGEGIKQFLRDSLRSTNVEVIQ), 487–521 (GACLGLGLSALGTADEEIYDDVKSVLYTDSAVAGE), 522–555 (AAGISMGLLLVGTATEKASEMLAYAHETQHEKII), 557–590 (GLALGIALTVYGREEGADTLIEQMTRDQDPIIRY), 591–626 (GGMYALALAYSGTANNKAIRQLLHFAVSDVSDDVRR), 627–659 (TAVLALGFVLYSDPEQTPRIVSLLSESYNPHVR), 661–695 (GAALAVGISCAGTGLSEAISLLEPLTSDVVDFVRQ), 696–736 (GALI…DTMS), and 739–771 (GAILASGILDAGGRNVTIRLLSKTKHDKVTAVI). 2 disordered regions span residues 858-905 (EQKA…KKAP) and 959-1004 (VLSL…EYAS). A Phosphoserine modification is found at Ser-896. Positions 965–987 (APTSTASPATGTAAAAQGTPASA) are enriched in low complexity.

It belongs to the proteasome subunit S1 family. As to quaternary structure, component of the 19S regulatory particle (RP/PA700) base subcomplex of the 26S proteasome. The 26S proteasome is composed of a core protease (CP), known as the 20S proteasome, capped at one or both ends by the 19S regulatory particle (RP/PA700). The RP/PA700 complex is composed of at least 17 different subunits in two subcomplexes, the base and the lid, which form the portions proximal and distal to the 20S proteolytic core, respectively. In terms of tissue distribution, ubiquitous with highest expression in flowers.

Its function is as follows. Acts as a regulatory subunit of the 26 proteasome which is involved in the ATP-dependent degradation of ubiquitinated proteins. The chain is 26S proteasome non-ATPase regulatory subunit 1 homolog A (RPN2A) from Arabidopsis thaliana (Mouse-ear cress).